The chain runs to 377 residues: Chaperone protein DnaJ (377 aa).

The J domain occupies D5–G70. The CR-type zinc finger occupies G137 to T219. Zn(2+) contacts are provided by C150, C153, C167, C170, C193, C196, C207, and C210. 4 CXXCXGXG motif repeats span residues C150–G157, C167–G174, C193–G200, and C207–G214.

It belongs to the DnaJ family. In terms of assembly, homodimer. Zn(2+) serves as cofactor.

It is found in the cytoplasm. In terms of biological role, participates actively in the response to hyperosmotic and heat shock by preventing the aggregation of stress-denatured proteins and by disaggregating proteins, also in an autonomous, DnaK-independent fashion. Unfolded proteins bind initially to DnaJ; upon interaction with the DnaJ-bound protein, DnaK hydrolyzes its bound ATP, resulting in the formation of a stable complex. GrpE releases ADP from DnaK; ATP binding to DnaK triggers the release of the substrate protein, thus completing the reaction cycle. Several rounds of ATP-dependent interactions between DnaJ, DnaK and GrpE are required for fully efficient folding. Also involved, together with DnaK and GrpE, in the DNA replication of plasmids through activation of initiation proteins. The chain is Chaperone protein DnaJ from Clostridium beijerinckii (strain ATCC 51743 / NCIMB 8052) (Clostridium acetobutylicum).